We begin with the raw amino-acid sequence, 330 residues long: tRNA-modifying protein YgfZ (330 aa).

Folate-binding residues include tryptophan 28 and tryptophan 190.

Belongs to the tRNA-modifying YgfZ family.

Its subcellular location is the cytoplasm. Its function is as follows. Folate-binding protein involved in regulating the level of ATP-DnaA and in the modification of some tRNAs. It is probably a key factor in regulatory networks that act via tRNA modification, such as initiation of chromosomal replication. The protein is tRNA-modifying protein YgfZ of Yersinia pseudotuberculosis serotype O:1b (strain IP 31758).